We begin with the raw amino-acid sequence, 114 residues long: UPF0342 protein NWMN_1737 (114 aa).

Belongs to the UPF0342 family.

The polypeptide is UPF0342 protein NWMN_1737 (Staphylococcus aureus (strain Newman)).